Reading from the N-terminus, the 325-residue chain is Lipoyl synthase (325 aa).

Residues 1–31 (MANLIDNTARSAASDARAARHPEKQKRADTP) are disordered. Residues 17 to 31 (RAARHPEKQKRADTP) show a composition bias toward basic and acidic residues. [4Fe-4S] cluster-binding residues include Cys65, Cys70, Cys76, Cys91, Cys95, Cys98, and Ser304. The 217-residue stretch at 77 to 293 (WEQKHATFMI…ETIARAKGFL (217 aa)) folds into the Radical SAM core domain.

Belongs to the radical SAM superfamily. Lipoyl synthase family. [4Fe-4S] cluster is required as a cofactor.

It localises to the cytoplasm. It carries out the reaction [[Fe-S] cluster scaffold protein carrying a second [4Fe-4S](2+) cluster] + N(6)-octanoyl-L-lysyl-[protein] + 2 oxidized [2Fe-2S]-[ferredoxin] + 2 S-adenosyl-L-methionine + 4 H(+) = [[Fe-S] cluster scaffold protein] + N(6)-[(R)-dihydrolipoyl]-L-lysyl-[protein] + 4 Fe(3+) + 2 hydrogen sulfide + 2 5'-deoxyadenosine + 2 L-methionine + 2 reduced [2Fe-2S]-[ferredoxin]. The protein operates within protein modification; protein lipoylation via endogenous pathway; protein N(6)-(lipoyl)lysine from octanoyl-[acyl-carrier-protein]: step 2/2. Functionally, catalyzes the radical-mediated insertion of two sulfur atoms into the C-6 and C-8 positions of the octanoyl moiety bound to the lipoyl domains of lipoate-dependent enzymes, thereby converting the octanoylated domains into lipoylated derivatives. This chain is Lipoyl synthase, found in Maricaulis maris (strain MCS10) (Caulobacter maris).